Consider the following 818-residue polypeptide: Patatin-like phospholipase domain-containing protein YALI0D16379g (818 aa).

Disordered stretches follow at residues 1–50 (MLKL…RDVN) and 154–178 (EEKRRRGKSKKDKEGSEGDKTKTKE). A compositionally biased stretch (polar residues) spans 22–38 (SQQLTLDSPEGSETSSR). The span at 164-178 (KDKEGSEGDKTKTKE) shows a compositional bias: basic and acidic residues. The chain crosses the membrane as a helical span at residues 223–243 (WPALFFIGMWLLFLTTIYASV). One can recognise a PNPLA domain in the interval 398 to 589 (LCLSGGGCFA…RTDIPVDALN (192 aa)). The short motif at 429–433 (GTSGG) is the GXSXG element. The active-site Nucleophile is Ser431. Asp576 (proton acceptor) is an active-site residue. The disordered stretch occupies residues 781–805 (AGTDISSSNSDYDHEPQWEMDEGDS).

This sequence belongs to the PLPL family.

The protein resides in the membrane. Its function is as follows. Probable lipid hydrolase. This chain is Patatin-like phospholipase domain-containing protein YALI0D16379g, found in Yarrowia lipolytica (strain CLIB 122 / E 150) (Yeast).